Consider the following 205-residue polypeptide: Transcriptional regulator GfcR (205 aa).

Belongs to the purine/pyrimidine phosphoribosyltransferase family. GfcR subfamily.

The sequence is that of Transcriptional regulator GfcR from Methanococcus maripaludis (strain C5 / ATCC BAA-1333).